Here is a 124-residue protein sequence, read N- to C-terminus: ATP synthase epsilon chain (124 aa).

Belongs to the ATPase epsilon chain family. F-type ATPases have 2 components, CF(1) - the catalytic core - and CF(0) - the membrane proton channel. CF(1) has five subunits: alpha(3), beta(3), gamma(1), delta(1), epsilon(1). CF(0) has three main subunits: a, b and c.

The protein resides in the cell membrane. Functionally, produces ATP from ADP in the presence of a proton gradient across the membrane. This is ATP synthase epsilon chain from Streptomyces griseus subsp. griseus (strain JCM 4626 / CBS 651.72 / NBRC 13350 / KCC S-0626 / ISP 5235).